Here is a 557-residue protein sequence, read N- to C-terminus: NAD(P)H-quinone oxidoreductase chain 4 (557 aa).

The next 14 helical transmembrane spans lie at 25-45 (FPWL…VPFI), 57-77 (YALF…LKGF), 111-131 (LILL…PVSF), 133-153 (PKLF…VFAV), 157-177 (LLFF…LAIW), 189-209 (FIIY…AMGF), 230-250 (GFQL…LPIV), 264-284 (TAPV…YALL), 298-318 (FAPL…LTSF), 327-347 (IAYS…SFST), 353-373 (AMLQ…LVGA), 397-417 (FALW…SGFV), 438-458 (IVIA…LLSM), and 485-505 (IYII…PRIM).

It belongs to the complex I subunit 4 family.

The protein resides in the cellular thylakoid membrane. It catalyses the reaction a plastoquinone + NADH + (n+1) H(+)(in) = a plastoquinol + NAD(+) + n H(+)(out). The catalysed reaction is a plastoquinone + NADPH + (n+1) H(+)(in) = a plastoquinol + NADP(+) + n H(+)(out). Its function is as follows. NDH-1 shuttles electrons from NAD(P)H, via FMN and iron-sulfur (Fe-S) centers, to quinones in the respiratory chain. The immediate electron acceptor for the enzyme in this species is believed to be plastoquinone. Couples the redox reaction to proton translocation (for every two electrons transferred, four hydrogen ions are translocated across the cytoplasmic membrane), and thus conserves the redox energy in a proton gradient. This chain is NAD(P)H-quinone oxidoreductase chain 4, found in Prochlorococcus marinus (strain SARG / CCMP1375 / SS120).